Consider the following 75-residue polypeptide: Small ribosomal subunit protein eS28 (75 aa).

The protein belongs to the eukaryotic ribosomal protein eS28 family.

This chain is Small ribosomal subunit protein eS28, found in Methanococcus aeolicus (strain ATCC BAA-1280 / DSM 17508 / OCM 812 / Nankai-3).